A 1512-amino-acid polypeptide reads, in one-letter code: DNA polymerase (1512 aa).

The protein belongs to the DNA polymerase type-B family.

Its subcellular location is the host nucleus. The catalysed reaction is DNA(n) + a 2'-deoxyribonucleoside 5'-triphosphate = DNA(n+1) + diphosphate. This chain is DNA polymerase (57/58), found in Ictalurid herpesvirus 1 (strain Auburn) (IcHV-1).